Consider the following 107-residue polypeptide: Putative double-stranded DNA mimic protein HI_1450 (107 aa).

Belongs to the putative dsDNA mimic protein family. Monomer in solution. Interacts with the DNA-binding protein HU.

May act as a double-stranded DNA (dsDNA) mimic. Probably regulates the activity of the DNA-binding protein HU. In Haemophilus influenzae (strain ATCC 51907 / DSM 11121 / KW20 / Rd), this protein is Putative double-stranded DNA mimic protein HI_1450.